The chain runs to 209 residues: E3 ubiquitin-protein ligase RNF138 (209 aa).

The segment at 18 to 58 (CPVCQEVLKTPVRTAACQHVFCRKCFLTAMRESGIHCPLCR) adopts an RING-type zinc-finger fold. Zn(2+)-binding residues include cysteine 86, cysteine 89, histidine 101, and cysteine 105. The C2HC RNF-type zinc finger occupies 86 to 105 (CRCCSKKIKFYRMRHHYKSC). Residues 125-154 (QDSVRSSNRSETSASDNTETYQEDTSSSGH) form a disordered region. Phosphothreonine is present on threonine 142. The C2H2-type zinc-finger motif lies at 157 to 180 (FKCPLCQESNFTRQRLLDHCNSNH). The 19-residue stretch at 189 to 207 (LQLDEETQYQTAVEESFQV) folds into the UIM domain.

Interacts with NLK. Interacts with XRCC5/Ku80. Interacts with RBBP8/CtIP. Auto-ubiquitinated.

It is found in the chromosome. It carries out the reaction S-ubiquitinyl-[E2 ubiquitin-conjugating enzyme]-L-cysteine + [acceptor protein]-L-lysine = [E2 ubiquitin-conjugating enzyme]-L-cysteine + N(6)-ubiquitinyl-[acceptor protein]-L-lysine.. The protein operates within protein modification; protein ubiquitination. In terms of biological role, E3 ubiquitin-protein ligase involved in DNA damage response by promoting DNA resection and homologous recombination. Recruited to sites of double-strand breaks following DNA damage and specifically promotes double-strand break repair via homologous recombination. Two different, non-exclusive, mechanisms have been proposed. According to a report, regulates the choice of double-strand break repair by favoring homologous recombination over non-homologous end joining (NHEJ): acts by mediating ubiquitination of XRCC5/Ku80, leading to remove the Ku complex from DNA breaks, thereby promoting homologous recombination. According to another report, cooperates with UBE2Ds E2 ubiquitin ligases (UBE2D1, UBE2D2, UBE2D3 or UBE2D4) to promote homologous recombination by mediating ubiquitination of RBBP8/CtIP. Together with NLK, involved in the ubiquitination and degradation of TCF/LEF. Also exhibits auto-ubiquitination activity in combination with UBE2K. May act as a negative regulator in the Wnt/beta-catenin-mediated signaling pathway. This Rattus norvegicus (Rat) protein is E3 ubiquitin-protein ligase RNF138.